We begin with the raw amino-acid sequence, 594 residues long: Cytoplasmic polyadenylation element-binding protein 2 (594 aa).

Positions Lys72–Asn90 are enriched in basic and acidic residues. 2 disordered regions span residues Lys72 to Gly91 and Gly367 to Glu388. Positions Gly367 to Asn378 are enriched in gly residues. Positions Leu458–Phe540 constitute an RRM domain.

Cytoplasmic polyadenylation element binding protein that binds to and regulates the translation of specific mRNAs. This Caenorhabditis japonica protein is Cytoplasmic polyadenylation element-binding protein 2 (cpb-2).